Reading from the N-terminus, the 184-residue chain is dCTP deaminase (184 aa).

Position 107-112 (Lys107–Arg112) interacts with dCTP. The active-site Proton donor/acceptor is Glu133. Positions 152, 166, and 176 each coordinate dCTP.

This sequence belongs to the dCTP deaminase family. As to quaternary structure, homotrimer.

The catalysed reaction is dCTP + H2O + H(+) = dUTP + NH4(+). It functions in the pathway pyrimidine metabolism; dUMP biosynthesis; dUMP from dCTP (dUTP route): step 1/2. Catalyzes the deamination of dCTP to dUTP. This chain is dCTP deaminase, found in Acidiphilium cryptum (strain JF-5).